The sequence spans 337 residues: Viral cathepsin (337 aa).

Residues Met1–Thr16 form the signal peptide. Positions Ser17 to Arg126 are cleaved as a propeptide — activation peptide. Disulfide bonds link Cys147–Cys188, Cys181–Cys221, and Cys276–Cys324. Cys150 is an active-site residue. Residues His283 and Asn303 contribute to the active site.

It belongs to the peptidase C1 family. Synthesized as an inactive proenzyme and activated by proteolytic removal of the inhibitory propeptide.

The catalysed reaction is Endopeptidase of broad specificity, hydrolyzing substrates of both cathepsin L and cathepsin B.. Its function is as follows. Cysteine protease that plays an essential role in host liquefaction to facilitate horizontal transmission of the virus. May participate in the degradation of foreign protein expressed by the baculovirus system. This Mamestra configurata (bertha armyworm) protein is Viral cathepsin (VCATH).